Consider the following 254-residue polypeptide: MAAAAATAATKGNGGGSGRVGAGDSSGARKKKGPGPVATAYLVIYNVVMTAGWLVIAVGLVRAYLAKGSYHSLYYSIERPLKFFQTGALLEILHCAIGIVPSSVVLTSFQVMSRVFLIWAVTHSVKEVQSEDSVLLFVIAWTITEIIRYSFYTFSLLNHLPYIIKWARYTLFIVLYPMGVTGELLTIYAALPFVRQAGLYSISLPNKYNFSFDYHAFLILIMISYIPLFPQLYFHMIHQRRKVLSHTEEHKKFE.

A compositionally biased stretch (low complexity) spans 1–10; that stretch reads MAAAAATAAT. The interval 1 to 34 is disordered; the sequence is MAAAAATAATKGNGGGSGRVGAGDSSGARKKKGP. N-acetylalanine is present on A2. Topologically, residues 2–41 are cytoplasmic; sequence AAAAATAATKGNGGGSGRVGAGDSSGARKKKGPGPVATAY. The segment covering 12-21 has biased composition (gly residues); it reads GNGGGSGRVG. A helical membrane pass occupies residues 42–60; sequence LVIYNVVMTAGWLVIAVGL. The Lumenal segment spans residues 61-79; that stretch reads VRAYLAKGSYHSLYYSIER. The chain crosses the membrane as a helical span at residues 80–97; it reads PLKFFQTGALLEILHCAI. Over 98 to 107 the chain is Cytoplasmic; sequence GIVPSSVVLT. Residues 108 to 125 traverse the membrane as a helical segment; the sequence is SFQVMSRVFLIWAVTHSV. Over 126-130 the chain is Lumenal; it reads KEVQS. Residues 131–146 form a helical membrane-spanning segment; sequence EDSVLLFVIAWTITEI. Residues 147–169 lie on the Cytoplasmic side of the membrane; sequence IRYSFYTFSLLNHLPYIIKWARY. A helical membrane pass occupies residues 170-187; sequence TLFIVLYPMGVTGELLTI. Catalysis depends on residues Y176 and E183. At 188-217 the chain is on the lumenal side; the sequence is YAALPFVRQAGLYSISLPNKYNFSFDYHAF. Residues 198 to 214 form a may be involved in interaction with TECR region; it reads GLYSISLPNKYNFSFDY. N-linked (GlcNAc...) asparagine glycosylation occurs at N209. A helical membrane pass occupies residues 218 to 235; the sequence is LILIMISYIPLFPQLYFH. The Cytoplasmic segment spans residues 236 to 254; that stretch reads MIHQRRKVLSHTEEHKKFE.

Belongs to the very long-chain fatty acids dehydratase HACD family. As to quaternary structure, may interact with enzymes of the ELO family (including ELOVL1); with those enzymes that mediate condensation, the first of the four steps of the reaction cycle responsible for fatty acids elongation, may be part of a larger fatty acids elongase complex. Interacts with BCAP31. Interacts with TECR.

It localises to the endoplasmic reticulum membrane. It carries out the reaction a very-long-chain (3R)-3-hydroxyacyl-CoA = a very-long-chain (2E)-enoyl-CoA + H2O. The enzyme catalyses (3R)-hydroxyhexadecanoyl-CoA = (2E)-hexadecenoyl-CoA + H2O. It catalyses the reaction (3R)-hydroxyoctadecanoyl-CoA = (2E)-octadecenoyl-CoA + H2O. The catalysed reaction is (3R)-hydroxyeicosanoyl-CoA = (2E)-eicosenoyl-CoA + H2O. It carries out the reaction (3R)-hydroxydocosanoyl-CoA = (2E)-docosenoyl-CoA + H2O. The enzyme catalyses (3R)-hydroxytetracosanoyl-CoA = (2E)-tetracosenoyl-CoA + H2O. It catalyses the reaction (3R)-hydroxyhexacosanoyl-CoA = (2E)-hexacosenoyl-CoA + H2O. The protein operates within lipid metabolism; fatty acid biosynthesis. In terms of biological role, catalyzes the third of the very long-chain fatty acids (VLCFA) elongation four-step cycle (condensation, reduction, dehydration, and reduction). This endoplasmic reticulum-elongation process is characterized by the addition of two carbons to the lipid chain through each cycle. This enzyme catalyzes the dehydration of the 3-hydroxyacyl-CoA intermediate into trans-2,3-enoyl-CoA, within each cycle of elongation. Therefore, it participates in the production of various VLCFAs involved in multiple biological processes as precursors of membrane lipids and lipid mediators. This is Very-long-chain (3R)-3-hydroxyacyl-CoA dehydratase 2 from Mus musculus (Mouse).